The chain runs to 47 residues: Defensin-2 (47 aa).

Cystine bridges form between cysteine 3–cysteine 47, cysteine 14–cysteine 35, cysteine 20–cysteine 41, and cysteine 24–cysteine 43.

The protein belongs to the DEFL family. As to expression, epidermis and vascular bundles of pods, stems, roots, leaves and wet or dry seeds.

Possesses antifungal activity sensitive to inorganic cations. This is Defensin-2 from Pisum sativum (Garden pea).